A 196-amino-acid chain; its full sequence is Large ribosomal subunit protein bL25 (196 aa).

It belongs to the bacterial ribosomal protein bL25 family. CTC subfamily. As to quaternary structure, part of the 50S ribosomal subunit; part of the 5S rRNA/L5/L18/L25 subcomplex. Contacts the 5S rRNA. Binds to the 5S rRNA independently of L5 and L18.

Its function is as follows. This is one of the proteins that binds to the 5S RNA in the ribosome where it forms part of the central protuberance. The sequence is that of Large ribosomal subunit protein bL25 from Bacteroides thetaiotaomicron (strain ATCC 29148 / DSM 2079 / JCM 5827 / CCUG 10774 / NCTC 10582 / VPI-5482 / E50).